A 770-amino-acid polypeptide reads, in one-letter code: Signal transducer and activator of transcription 3 (770 aa).

An N-acetylalanine modification is found at Ala-2. N6-acetyllysine is present on residues Lys-49 and Lys-87. Residues 150-162 (DVRKRVQDLEQKM) carry the Essential for nuclear import motif. The SH2 domain maps to 580 to 670 (WNEGYIMGFI…DATNILVSPL (91 aa)). Residues Lys-601, Lys-615, and Lys-631 each carry the allysine; alternate modification. Residues Lys-601, Lys-615, and Lys-631 each carry the N6-acetyllysine; alternate modification. Phosphotyrosine; by TYK2 is present on Tyr-640. The residue at position 685 (Lys-685) is an Allysine; alternate. An N6-acetyllysine; alternate modification is found at Lys-685. At Tyr-705 the chain carries Phosphotyrosine; by FER and PTK6. An N6-acetyllysine modification is found at Lys-707. A Phosphothreonine modification is found at Thr-714. Ser-727 is modified (phosphoserine; by DYRK2, NLK, NEK6, IRAK1, RPS6KA5, ZIPK/DAPK3 and PKC/PRKCE).

Belongs to the transcription factor STAT family. Forms a homodimer or a heterodimer with a related family member (at least STAT1). Component of a promoter-binding complex composed of STAT3, NFATC3 and NFATC4; complex formation is enhanced by calcineurin. Interacts with IL31RA, NCOA1, PELP1, SIPAR, SOCS7, STATIP1 and TMF1. Interacts with IL23R in presence of IL23. Interacts (via SH2 domain) with NLK. Interacts with ARL2BP; the interaction is enhanced by LIF and JAK1 expression. Interacts with KPNA4 and KPNA5; KPNA4 may be the primary mediator of nuclear import. Interacts with CAV2; the interaction is increased on insulin-induced tyrosine phosphorylation of CAV2 and leads to STAT3 activation. Interacts with ARL2BP; interaction is enhanced with ARL2. Interacts with NEK6. Binds to CDK9 when activated and nuclear. Interacts with BMX. Interacts with ZIPK/DAPK3. Interacts with PIAS3; the interaction occurs on stimulation by IL6, CNTF or OSM and inhibits the DNA binding activity of STAT3. In prostate cancer cells, interacts with PRKCE and promotes DNA binding activity of STAT3. Interacts with STMN3, antagonizing its microtubule-destabilizing activity. Interacts with the 'Lys-129' acetylated form of BIRC5/survivin. Interacts with FER. Interacts (via SH2 domain) with EIF2AK2/PKR (via the kinase catalytic domain). Interacts with FGFR4. Interacts with INPP5F; the interaction is independent of STAT3 Tyr-705 phosphorylation status. Interacts with OCIAD1 and OCIAD2. Interacts (unphosphorylated or phosphorylated at Ser-727) with PHB1. Interacts and may form heterodimers with NHLH1. Found in a complex with SLC39A6, SLC39A10 and with the 'Ser-727' phosphorylated form of STAT3 throughout mitosis. Interacts (when acetylated) with EP300 (via bromo domain); interaction takes place following STAT3 acetylation by EP300 and promotes enhanceosome assembly. Interacts (when acetylated) with BRD2 (via bromo domain); interaction promotes STAT3 recruitment to chromatin and T-helper Th17 cell differentiation. Interacts with FAM220A/SIPAR; the interaction occurs in both the nucleus and the cytoplasm, is enhanced by IL6 and promotes STAT3 dephosphorylation. Interacts in both unphosphorylated and phosphorylated forms with FAM220A but interacts preferentially in the phosphorylated form in the nucleus. Interacts with PTPN2; the interaction is promoted by FAM220A and leads to STAT3 dephosphorylation which negatively regulates STAT3 transcriptional activator activity. Activated through tyrosine phosphorylation by BMX. Tyrosine phosphorylated in response to IL-6, IL-11, CNTF, LIF, CSF-1, EGF, PDGF, IFN-alpha and OSM. Tyrosine phosphorylated in response to constitutively activated FGFR1, FGFR2, FGFR3 and FGFR4. Phosphorylated on serine upon DNA damage, probably by ATM or ATR. Serine phosphorylation is important for the formation of stable DNA-binding STAT3 homodimers and maximal transcriptional activity. ARL2BP may participate in keeping the phosphorylated state of STAT3 within the nucleus. Tyrosine phosphorylated upon stimulation with EGF. Upon LPS challenge, phosphorylated within the nucleus by IRAK1. Phosphorylated on Ser-727 by RPS6KA5. Dephosphorylation on tyrosine residues by PTPN2 negatively regulates IL6/interleukin-6 signaling. Phosphorylation at Tyr-705 by FER, isoform M2 of PKM (PKM2) or PTK6 leads to an increase of its transcriptional activity. Phosphorylation at Tyr-705 is increased in the presence of calcineurin. Phosphorylation at Tyr-640 by TYK2 negatively regulates transcriptional activity. In terms of processing, acetylated on lysine residues by EP300/p300, promoting its activation. Acetylation at Lys-49 and Lys-87 by EP300/p300 promotes its activation. Acetylation at Lys-87 by EP300/p300 promotes its association with BRD2 and recruitment to chromatin. Deacetylated at Lys-49 and Lys-87 by HDAC1. Acetylation at Lys-685 by EP300/p300 promotes its homodimerization and activation. Deacetylated at Lys-685 by HDAC3. Acetylated on lysine residues by CREBBP. Deacetylation by LOXL3 leads to disrupt STAT3 dimerization and inhibit STAT3 transcription activity. Oxidation of lysine residues to allysine on STAT3 preferentially takes place on lysine residues that are acetylated. Post-translationally, some lysine residues are oxidized to allysine by LOXL3, leading to disrupt STAT3 dimerization and inhibit STAT3 transcription activity. Oxidation of lysine residues to allysine on STAT3 preferentially takes place on lysine residues that are acetylated.

The protein resides in the cytoplasm. It is found in the nucleus. In terms of biological role, signal transducer and transcription activator that mediates cellular responses to interleukins, KITLG/SCF, LEP and other growth factors. Once activated, recruits coactivators, such as NCOA1 or MED1, to the promoter region of the target gene. May mediate cellular responses to activated FGFR1, FGFR2, FGFR3 and FGFR4. Upon activation of IL6ST/gp130 signaling by interleukin-6 (IL6), binds to the IL6-responsive elements identified in the promoters of various acute-phase protein genes. Activated by IL31 through IL31RA. Acts as a regulator of inflammatory response by regulating differentiation of naive CD4(+) T-cells into T-helper Th17 or regulatory T-cells (Treg): acetylation promotes its transcription activity and cell differentiation while deacetylation and oxidation of lysine residues by LOXL3 inhibits differentiation. Involved in cell cycle regulation by inducing the expression of key genes for the progression from G1 to S phase, such as CCND1. Mediates the effects of LEP on melanocortin production, body energy homeostasis and lactation. May play an apoptotic role by transctivating BIRC5 expression under LEP activation. Cytoplasmic STAT3 represses macroautophagy by inhibiting EIF2AK2/PKR activity. Plays a crucial role in basal beta cell functions, such as regulation of insulin secretion. Following JAK/STAT signaling activation and as part of a complex with NFATC3 and NFATC4, binds to the alpha-beta E4 promoter region of CRYAB and activates transcription in cardiomyocytes. Plays an important role in host defense in methicillin-resistant S.aureus lung infection by regulating the expression of the antimicrobial lectin REG3G. In Bos taurus (Bovine), this protein is Signal transducer and activator of transcription 3 (STAT3).